Consider the following 252-residue polypeptide: Probable transcriptional regulatory protein all4276 (252 aa).

Belongs to the TACO1 family.

It localises to the cytoplasm. This Nostoc sp. (strain PCC 7120 / SAG 25.82 / UTEX 2576) protein is Probable transcriptional regulatory protein all4276.